Reading from the N-terminus, the 276-residue chain is Neuroendocrine protein 7B2 (276 aa).

A disulfide bond links cysteine 155 and cysteine 168.

It belongs to the 7B2 family. As to quaternary structure, interacts with amon/PC2 early in the secretory pathway. Dissociation occurs at later stages.

Its subcellular location is the secreted. Functionally, acts as a molecular chaperone for neuroendocrine convertase amon/PC2, preventing its premature activation in the regulated secretory pathway. Binds to inactive amon in the endoplasmic reticulum and facilitates its transport from there to later compartments of the secretory pathway where it is proteolytically matured and activated. Also required for cleavage of amon. This is Neuroendocrine protein 7B2 from Drosophila melanogaster (Fruit fly).